Reading from the N-terminus, the 270-residue chain is Orotidine 5'-phosphate decarboxylase (270 aa).

The active-site Proton donor is Lys95.

Belongs to the OMP decarboxylase family. Type 2 subfamily.

The catalysed reaction is orotidine 5'-phosphate + H(+) = UMP + CO2. It participates in pyrimidine metabolism; UMP biosynthesis via de novo pathway; UMP from orotate: step 2/2. This chain is Orotidine 5'-phosphate decarboxylase, found in Azoarcus sp. (strain BH72).